The chain runs to 247 residues: Protein GrpE (247 aa).

Disordered stretches follow at residues M1–D68 and P226–N247. Basic and acidic residues-rich tracts occupy residues K7–Q35, T43–E54, and E228–N247.

The protein belongs to the GrpE family. Homodimer.

The protein resides in the cytoplasm. In terms of biological role, participates actively in the response to hyperosmotic and heat shock by preventing the aggregation of stress-denatured proteins, in association with DnaK and GrpE. It is the nucleotide exchange factor for DnaK and may function as a thermosensor. Unfolded proteins bind initially to DnaJ; upon interaction with the DnaJ-bound protein, DnaK hydrolyzes its bound ATP, resulting in the formation of a stable complex. GrpE releases ADP from DnaK; ATP binding to DnaK triggers the release of the substrate protein, thus completing the reaction cycle. Several rounds of ATP-dependent interactions between DnaJ, DnaK and GrpE are required for fully efficient folding. The polypeptide is Protein GrpE (Treponema denticola (strain ATCC 35405 / DSM 14222 / CIP 103919 / JCM 8153 / KCTC 15104)).